A 491-amino-acid polypeptide reads, in one-letter code: Aspartyl/glutamyl-tRNA(Asn/Gln) amidotransferase subunit B (491 aa).

Belongs to the GatB/GatE family. GatB subfamily. In terms of assembly, heterotrimer of A, B and C subunits.

The catalysed reaction is L-glutamyl-tRNA(Gln) + L-glutamine + ATP + H2O = L-glutaminyl-tRNA(Gln) + L-glutamate + ADP + phosphate + H(+). The enzyme catalyses L-aspartyl-tRNA(Asn) + L-glutamine + ATP + H2O = L-asparaginyl-tRNA(Asn) + L-glutamate + ADP + phosphate + 2 H(+). In terms of biological role, allows the formation of correctly charged Asn-tRNA(Asn) or Gln-tRNA(Gln) through the transamidation of misacylated Asp-tRNA(Asn) or Glu-tRNA(Gln) in organisms which lack either or both of asparaginyl-tRNA or glutaminyl-tRNA synthetases. The reaction takes place in the presence of glutamine and ATP through an activated phospho-Asp-tRNA(Asn) or phospho-Glu-tRNA(Gln). This is Aspartyl/glutamyl-tRNA(Asn/Gln) amidotransferase subunit B from Burkholderia cenocepacia (strain HI2424).